The primary structure comprises 102 residues: Acid shock protein (102 aa).

The signal sequence occupies residues 1–21; the sequence is MKKVLALVVAAAMGLSSAAFA. The span at 22–41 shows a compositional bias: low complexity; that stretch reads AETATTPAPTATTTKAAPAK. A propeptide spanning residues 22–58 is cleaved from the precursor; it reads AETATTPAPTATTTKAAPAKTTHHKKQHKAAPAQKAQ. The tract at residues 22–102 is disordered; the sequence is AETATTPAPT…PAKPAAQPAA (81 aa). Over residues 80 to 90 the composition is skewed to basic residues; the sequence is AAKKHAGKHSH. Positions 91-102 are enriched in low complexity; it reads QQPAKPAAQPAA.

Belongs to the Asr family. Proteolytic processing gives rise to the active protein.

It is found in the periplasm. Functionally, required for growth and/or survival at acidic conditions. This Escherichia coli (strain 55989 / EAEC) protein is Acid shock protein.